Consider the following 1223-residue polypeptide: DNA-directed RNA polymerase subunit beta'' (1223 aa).

Residues cysteine 233, cysteine 307, cysteine 314, and cysteine 317 each coordinate Zn(2+).

The protein belongs to the RNA polymerase beta' chain family. RpoC2 subfamily. In plastids the minimal PEP RNA polymerase catalytic core is composed of four subunits: alpha, beta, beta', and beta''. When a (nuclear-encoded) sigma factor is associated with the core the holoenzyme is formed, which can initiate transcription. Zn(2+) serves as cofactor.

It is found in the plastid. Its subcellular location is the chloroplast. The enzyme catalyses RNA(n) + a ribonucleoside 5'-triphosphate = RNA(n+1) + diphosphate. Its function is as follows. DNA-dependent RNA polymerase catalyzes the transcription of DNA into RNA using the four ribonucleoside triphosphates as substrates. In Mesostigma viride (Green alga), this protein is DNA-directed RNA polymerase subunit beta''.